A 160-amino-acid polypeptide reads, in one-letter code: SsrA-binding protein (160 aa).

The protein belongs to the SmpB family.

The protein resides in the cytoplasm. Its function is as follows. Required for rescue of stalled ribosomes mediated by trans-translation. Binds to transfer-messenger RNA (tmRNA), required for stable association of tmRNA with ribosomes. tmRNA and SmpB together mimic tRNA shape, replacing the anticodon stem-loop with SmpB. tmRNA is encoded by the ssrA gene; the 2 termini fold to resemble tRNA(Ala) and it encodes a 'tag peptide', a short internal open reading frame. During trans-translation Ala-aminoacylated tmRNA acts like a tRNA, entering the A-site of stalled ribosomes, displacing the stalled mRNA. The ribosome then switches to translate the ORF on the tmRNA; the nascent peptide is terminated with the 'tag peptide' encoded by the tmRNA and targeted for degradation. The ribosome is freed to recommence translation, which seems to be the essential function of trans-translation. This is SsrA-binding protein from Actinobacillus succinogenes (strain ATCC 55618 / DSM 22257 / CCUG 43843 / 130Z).